The following is a 1275-amino-acid chain: MRSKARARKLAKSDGDVVNNMYEPDPDLLAGQSAEEETEDGILSPIPMGPPSPFPTSEDFTPKEGSPYEAPVYIPEDIPIPPDFELRESSIPGAGLGIWAKRKMEIGERFGPYVVTPRAALKEADFGWEMLTDTEVSSQESCIKKQISEDLGSEKFCVDANQAGSGSWLKYIRVACSCDDQNLAMCQINEQIYYKVIKDIEPGEELLVHVKEGAYSLGVMAPSLDEDPTFRCDECDELFQCRLDLRRHKKYACSSAGAQLYEGLGEELKPEGLGVGSDGQAHECKDCERMFPNKYSLEQHMIVHTEEREYKCDQCPKAFNWKSNLIRHQMSHDSGKRFECENCVKVFTDPSNLQRHIRSQHVGARAHACPDCGKTFATSSGLKQHKHIHSTVKPFICEVCHKSYTQFSNLCRHKRMHADCRTQIKCKDCGQMFSTTSSLNKHRRFCEGKNHYTPGSIFTPGLPLTPSPMMDKTKPSPTLNHGGLGFSEYFPSRPHPGSLPFSAAPPAFPALTPGFPGIFPPSLYPRPPLLPPTPLLKSPLNHAQDAKLPSPLGNPALPLVSAVSNSSQGATAATGSEEKFDGRLEDAYAEKVKNRSPDMSDGSDFEDINTTTGTDLDTTTGTGSDLDSDLDSDRDKGKDKGKPVESKPEFGGASVPPGAMNSVAEVPAFYSQHSFFPPPEEQLLTASGAAGDSIKAIASIAEKYFGPGFMSMQEKKLGSLPYHSVFPFQFLPNFPHSLYPFTDRALAHNLLVKAEPKSPRDALKVGGPSAECPFDLTTKPKEAKPALLAPKVPLIPSSGEEQPLDLSIGSRARASQNGGGREPRKNHVYGERKPGVSEGLPKVCPAQLPQQPSLHYAKPSPFFMDPIYRVEKRKVADPVGVLKEKYLRPSPLLFHPQMSAIETMTEKLESFAAMKADSGSSLQPLPHHPFNFRSPPPTLSDPILRKGKERYTCRYCGKIFPRSANLTRHLRTHTGEQPYRCKYCDRSFSISSNLQRHVRNIHNKEKPFKCHLCNRCFGQQTNLDRHLKKHEHEGAPVSQHSGVLTNHLGTSASSPTSESDNHALLDEKEDSYFSEIRNFIANSEMNQASTRMDKRPEIQDLDSNPPCPGSASAKPEDVEEEEEEELEEEDDDSLAGKSQEDTVSPTPEPQGVYEDEEDEEPPSLTMGFDHTRRCVEERGGGLLALEPTPTFGKGLDLRRAAEEAFEVKDVLNSTLDSEVLKQTLYRQAKNQAYAMMLSLSEDTPLHAPSQSSLDAWLNITGPSSESGAFNPINHL.

Residues 1 to 10 are compositionally biased toward basic residues; sequence MRSKARARKL. A disordered region spans residues 1-66; the sequence is MRSKARARKL…SEDFTPKEGS (66 aa). Positions 82–211 constitute an SET domain; the sequence is PDFELRESSI…PGEELLVHVK (130 aa). Residues 230 to 255 form a C2H2-type 1; degenerate zinc finger; it reads FRCDECDELFQCRLDLRRHKKYACSS. C2H2-type zinc fingers lie at residues 282-304, 310-332, 338-361, 367-389, and 395-417; these read HECK…MIVH, YKCD…QMSH, FECE…RSQH, HACP…KHIH, and FICE…KRMH. Residues 424 to 446 form a C2H2-type 7; atypical zinc finger; the sequence is IKCKDCGQMFSTTSSLNKHRRFC. Disordered regions lie at residues 592-658 and 789-838; these read VKNR…VPPG and APKV…GVSE. Low complexity predominate over residues 610-625; the sequence is TTTGTDLDTTTGTGSD. 2 stretches are compositionally biased toward basic and acidic residues: residues 631 to 648 and 821 to 835; these read DSDR…ESKP and REPR…RKPG. The segment at 680 to 1038 is interaction with CTBP1, CTBP2 and ZNF516; it reads EEQLLTASGA…KHEHEGAPVS (359 aa). The segment at 740 to 1275 is mediates interaction with SKI and regulation of TGF-beta signaling; the sequence is PFTDRALAHN…SGAFNPINHL (536 aa). 3 consecutive C2H2-type zinc fingers follow at residues 951–973, 979–1002, and 1008–1030; these read YTCR…LRTH, YRCK…RNIH, and FKCH…LKKH. Disordered stretches follow at residues 1027-1065 and 1084-1169; these read LKKH…HALL and EMNQ…MGFD. Residues 1038 to 1058 are compositionally biased toward polar residues; that stretch reads SQHSGVLTNHLGTSASSPTSE. A compositionally biased stretch (acidic residues) spans 1117–1133; it reads DVEEEEEEELEEEDDDS.

It belongs to the PRDM16 family. In terms of assembly, interacts with CEBPA, CEBPB and CEBPD; the interaction is direct. Interacts with PPARG and PPARA; controls brown adipocytes. Interacts with CTBP1 and CTBP2; represses the expression of WAT-specific genes. Interacts with PPARGC1A and PPARGC1B; interaction with PPARGC1A or PPARGC1B activates the transcription of BAT-specific gene. Interacts with HDAC1, SKI and SMAD2; the interaction with SKI promotes the recruitment of SMAD3-HDAC1 complex on the promoter of TGF-beta target genes. Interacts with ZNF516; the interaction is direct and may play a role in the transcription of brown adipose tissue-specific gene. As to expression, enriched in BAT compared to WAT. Detected in heart, lung, kidney and brain. Expressed in nuclei of cardiomyocytes.

The protein resides in the nucleus. It is found in the cytoplasm. It carries out the reaction L-lysyl(9)-[histone H3] + S-adenosyl-L-methionine = N(6)-methyl-L-lysyl(9)-[histone H3] + S-adenosyl-L-homocysteine + H(+). Binds DNA and functions as a transcriptional regulator. Displays histone methyltransferase activity and monomethylates 'Lys-9' of histone H3 (H3K9me1) in vitro. Probably catalyzes the monomethylation of free histone H3 in the cytoplasm which is then transported to the nucleus and incorporated into nucleosomes where SUV39H methyltransferases use it as a substrate to catalyze histone H3 'Lys-9' trimethylation. Likely to be one of the primary histone methyltransferases along with MECOM/PRDM3 that direct cytoplasmic H3K9me1 methylation. Functions in the differentiation of brown adipose tissue (BAT) which is specialized in dissipating chemical energy in the form of heat in response to cold or excess feeding while white adipose tissue (WAT) is specialized in the storage of excess energy and the control of systemic metabolism. Together with CEBPB, regulates the differentiation of myoblastic precursors into brown adipose cells. Functions as a repressor of TGF-beta signaling. The chain is Histone-lysine N-methyltransferase PRDM16 from Mus musculus (Mouse).